The following is a 339-amino-acid chain: MSSLLEQLSSMTIVVADTGDLEAIRTFKPRDATTNPSLILAAAQVPGYQKLIDEALKSSREEIGIRGSFQEVVKEALDQICVVFGKEILKNIPGRVSTEVDARLSFDTQATVEKARKLIRLYNKAGIKNDRVLIKIASTWEGIKAAEVLEREGIHCNLTLLFNFCQAAACAEAGVTLISPFVGRILDWYKANTGIANYPGPEDPGVISVTKIFNYFKSNNYKTEVMGASFRNIEEIVELAGCDLLTISPKLLDQLSNTNVPLEKKLDSLNPKPVGQKIDIDHEKFESMMNSDSMAFEKLDEGIKKFSKAIDDLEIRLLERIAILEEGKSFALSGNAISS.

The Schiff-base intermediate with substrate role is filled by Lys-135.

Belongs to the transaldolase family. Type 1 subfamily. As to quaternary structure, homodimer.

It is found in the cytoplasm. The catalysed reaction is D-sedoheptulose 7-phosphate + D-glyceraldehyde 3-phosphate = D-erythrose 4-phosphate + beta-D-fructose 6-phosphate. Its pathway is carbohydrate degradation; pentose phosphate pathway; D-glyceraldehyde 3-phosphate and beta-D-fructose 6-phosphate from D-ribose 5-phosphate and D-xylulose 5-phosphate (non-oxidative stage): step 2/3. Functionally, transaldolase is important for the balance of metabolites in the pentose-phosphate pathway. The sequence is that of Transaldolase from Prochlorococcus marinus (strain MIT 9211).